Reading from the N-terminus, the 382-residue chain is MQDAAPRLTFTLRDEERLMMKIGVFVPIGNNGWLISTHAPQYMPTFELNKAIVQKAEHYHFDFALSMIKLRGFGGKTEFWDHNLESFTLMAGLAAVTSRIQIYATAATLTLPPAIVARMAATIDSISGGRFGVNLVTGWQKPEYEQMGIWPGDDYFSRRYDYLTEYVQVLRDLWGSGKSDFKGDFFTMDDCRVSPQPSVPMKVICAGQSDAGMAFSARYADFNFCFGKGVNTPTAFAPTAARMKQAAEQTGRDVGSYVLFMVIADETDDAARAKWEHYKAGADEEALSWLTEQSQKDTRSDTDTNVRQMADPTSAVNINMGTLVGSYASVARMLDEVASVPGAEGVLLTFDDFLSGIENFGERIQPLMQCRAHLPALTQEVA.

FMN-binding positions include 68–69, Asn134, Glu143, 159–160, and Ser209; these read IK and RY.

Belongs to the NtaA/SnaA/DszA monooxygenase family. RutA subfamily.

It catalyses the reaction uracil + FMNH2 + NADH + O2 = (Z)-3-ureidoacrylate + FMN + NAD(+) + H2O + H(+). It carries out the reaction thymine + FMNH2 + NADH + O2 = (Z)-2-methylureidoacrylate + FMN + NAD(+) + H2O + H(+). In terms of biological role, catalyzes the pyrimidine ring opening between N-3 and C-4 by an unusual flavin hydroperoxide-catalyzed mechanism, adding oxygen atoms in the process to yield ureidoacrylate peracid, that immediately reacts with FMN forming ureidoacrylate and FMN-N(5)-oxide. The FMN-N(5)-oxide reacts spontaneously with NADH to produce FMN. Requires the flavin reductase RutF to regenerate FMN in vivo. The protein is Pyrimidine monooxygenase RutA of Escherichia coli O81 (strain ED1a).